Reading from the N-terminus, the 621-residue chain is UvrABC system protein C (621 aa).

Positions 13 to 92 (EKPGVYMMRN…IKENRPKYNV (80 aa)) constitute a GIY-YIG domain. The UVR domain occupies 205 to 240 (DELVRKIEEKMKAAAISMDFENAARYRDQIIALNNI).

It belongs to the UvrC family. In terms of assembly, interacts with UvrB in an incision complex.

The protein resides in the cytoplasm. Functionally, the UvrABC repair system catalyzes the recognition and processing of DNA lesions. UvrC both incises the 5' and 3' sides of the lesion. The N-terminal half is responsible for the 3' incision and the C-terminal half is responsible for the 5' incision. The chain is UvrABC system protein C from Alkaliphilus oremlandii (strain OhILAs) (Clostridium oremlandii (strain OhILAs)).